A 259-amino-acid polypeptide reads, in one-letter code: Adenosylcobinamide-GDP ribazoletransferase (259 aa).

Helical transmembrane passes span asparagine 9–valine 29, leucine 43–valine 63, serine 64–histidine 84, alanine 118–phenylalanine 138, valine 143–phenylalanine 163, and isoleucine 190–leucine 210.

The protein belongs to the CobS family. The cofactor is Mg(2+).

The protein resides in the cell inner membrane. The enzyme catalyses alpha-ribazole + adenosylcob(III)inamide-GDP = adenosylcob(III)alamin + GMP + H(+). It carries out the reaction alpha-ribazole 5'-phosphate + adenosylcob(III)inamide-GDP = adenosylcob(III)alamin 5'-phosphate + GMP + H(+). Its pathway is cofactor biosynthesis; adenosylcobalamin biosynthesis; adenosylcobalamin from cob(II)yrinate a,c-diamide: step 7/7. In terms of biological role, joins adenosylcobinamide-GDP and alpha-ribazole to generate adenosylcobalamin (Ado-cobalamin). Also synthesizes adenosylcobalamin 5'-phosphate from adenosylcobinamide-GDP and alpha-ribazole 5'-phosphate. In Shewanella pealeana (strain ATCC 700345 / ANG-SQ1), this protein is Adenosylcobinamide-GDP ribazoletransferase.